Reading from the N-terminus, the 208-residue chain is ATP-dependent Clp protease proteolytic subunit (208 aa).

Ser-105 acts as the Nucleophile in catalysis. His-130 is an active-site residue.

Belongs to the peptidase S14 family. As to quaternary structure, fourteen ClpP subunits assemble into 2 heptameric rings which stack back to back to give a disk-like structure with a central cavity, resembling the structure of eukaryotic proteasomes.

The protein localises to the cytoplasm. The enzyme catalyses Hydrolysis of proteins to small peptides in the presence of ATP and magnesium. alpha-casein is the usual test substrate. In the absence of ATP, only oligopeptides shorter than five residues are hydrolyzed (such as succinyl-Leu-Tyr-|-NHMec, and Leu-Tyr-Leu-|-Tyr-Trp, in which cleavage of the -Tyr-|-Leu- and -Tyr-|-Trp bonds also occurs).. Cleaves peptides in various proteins in a process that requires ATP hydrolysis. Has a chymotrypsin-like activity. Plays a major role in the degradation of misfolded proteins. The sequence is that of ATP-dependent Clp protease proteolytic subunit from Xylella fastidiosa (strain 9a5c).